The primary structure comprises 232 residues: tRNA1(Val) (adenine(37)-N6)-methyltransferase (232 aa).

This sequence belongs to the methyltransferase superfamily. tRNA (adenine-N(6)-)-methyltransferase family.

Its subcellular location is the cytoplasm. It carries out the reaction adenosine(37) in tRNA1(Val) + S-adenosyl-L-methionine = N(6)-methyladenosine(37) in tRNA1(Val) + S-adenosyl-L-homocysteine + H(+). Its function is as follows. Specifically methylates the adenine in position 37 of tRNA(1)(Val) (anticodon cmo5UAC). This chain is tRNA1(Val) (adenine(37)-N6)-methyltransferase, found in Pseudoalteromonas translucida (strain TAC 125).